Reading from the N-terminus, the 172-residue chain is 3-phenylpropionate/cinnamic acid dioxygenase subunit beta (172 aa).

This sequence belongs to the bacterial ring-hydroxylating dioxygenase beta subunit family. As to quaternary structure, this dioxygenase system consists of four proteins: the two subunits of the hydroxylase component (HcaE and HcaF), a ferredoxin (HcaC) and a ferredoxin reductase (HcaD).

The enzyme catalyses 3-phenylpropanoate + NADH + O2 + H(+) = 3-(cis-5,6-dihydroxycyclohexa-1,3-dien-1-yl)propanoate + NAD(+). It catalyses the reaction (E)-cinnamate + NADH + O2 + H(+) = (2E)-3-(cis-5,6-dihydroxycyclohexa-1,3-dien-1-yl)prop-2-enoate + NAD(+). It functions in the pathway aromatic compound metabolism; 3-phenylpropanoate degradation. Functionally, part of the multicomponent 3-phenylpropionate dioxygenase. Converts 3-phenylpropionic acid (PP) and cinnamic acid (CI) into 3-phenylpropionate-dihydrodiol (PP-dihydrodiol) and cinnamic acid-dihydrodiol (CI-dihydrodiol), respectively. The protein is 3-phenylpropionate/cinnamic acid dioxygenase subunit beta of Escherichia coli O7:K1 (strain IAI39 / ExPEC).